A 209-amino-acid chain; its full sequence is Ribonuclease HII (209 aa).

Positions Cys-19–Lys-209 constitute an RNase H type-2 domain. The a divalent metal cation site is built by Asp-25, Glu-26, and Asp-118.

This sequence belongs to the RNase HII family. Mn(2+) is required as a cofactor. Mg(2+) serves as cofactor.

It is found in the cytoplasm. The catalysed reaction is Endonucleolytic cleavage to 5'-phosphomonoester.. Functionally, endonuclease that specifically degrades the RNA of RNA-DNA hybrids. The chain is Ribonuclease HII from Ehrlichia canis (strain Jake).